Reading from the N-terminus, the 301-residue chain is Coiled-coil domain-containing protein 50 (301 aa).

Residues 57–131 (QVAKQLQEEE…LQEEKKRKKH (75 aa)) are a coiled coil. Composition is skewed to basic and acidic residues over residues 123-142 (QEEKKRKKHYPESQEHKVYE), 161-175 (VYDKPRREQELSDAE), and 214-262 (AFKK…DKSS). Disordered regions lie at residues 123-175 (QEEK…SDAE) and 214-301 (AFKK…RRKQ).

In terms of processing, phosphorylated on tyrosine residues.

Functionally, involved in EGFR signaling. The protein is Coiled-coil domain-containing protein 50 (CCDC50) of Gallus gallus (Chicken).